Consider the following 314-residue polypeptide: Caspase-like protein (314 aa).

This sequence belongs to the peptidase C14A family.

In terms of biological role, may be involved in viral replication. The protein is Caspase-like protein of Heliothis virescens ascovirus 3e (HvAV-3e).